The sequence spans 119 residues: Large ribosomal subunit protein bL20 (119 aa).

The protein belongs to the bacterial ribosomal protein bL20 family.

In terms of biological role, binds directly to 23S ribosomal RNA and is necessary for the in vitro assembly process of the 50S ribosomal subunit. It is not involved in the protein synthesizing functions of that subunit. The polypeptide is Large ribosomal subunit protein bL20 (Shewanella sediminis (strain HAW-EB3)).